Reading from the N-terminus, the 65-residue chain is Prokaryotic ubiquitin-like protein Pup (65 aa).

The interval 1–38 (MANAQQQVFGGGGGDDAENNDAPQQGSGTQQVNVTGTD) is disordered. The tract at residues 21–59 (DAPQQGSGTQQVNVTGTDDLLDEIDGLLETNAEEFVRSY) is ARC ATPase binding. A compositionally biased stretch (polar residues) spans 22-34 (APQQGSGTQQVNV). The residue at position 65 (Gln65) is a Deamidated glutamine. Gln65 is covalently cross-linked (Isoglutamyl lysine isopeptide (Gln-Lys) (interchain with K-? in acceptor proteins)).

The protein belongs to the prokaryotic ubiquitin-like protein family. As to quaternary structure, strongly interacts with the proteasome-associated ATPase ARC through a hydrophobic interface; the interacting region of Pup lies in its C-terminal half. There is one Pup binding site per ARC hexamer ring. Is modified by deamidation of its C-terminal glutamine to glutamate by the deamidase Dop, a prerequisite to the subsequent pupylation process.

The protein operates within protein degradation; proteasomal Pup-dependent pathway. In terms of biological role, protein modifier that is covalently attached to lysine residues of substrate proteins, thereby targeting them for proteasomal degradation. The tagging system is termed pupylation. The protein is Prokaryotic ubiquitin-like protein Pup of Corynebacterium urealyticum (strain ATCC 43042 / DSM 7109).